The chain runs to 620 residues: Estrogen receptor (620 aa).

2 stretches are compositionally biased toward polar residues: residues 1-10 (MSKRQSSVQI) and 101-111 (GSLQSLGSGPT). 2 disordered regions span residues 1-55 (MSKR…RGSG) and 88-111 (YSAP…SGPT). A modulating region spans residues 1–185 (MSKRQSSVQI…GFEMAKDTRF (185 aa)). 2 NR C4-type zinc fingers span residues 186–206 (CAVC…CEGC) and 222–246 (CPAT…LRKC). A DNA-binding region (nuclear receptor) is located at residues 186 to 251 (CAVCSDYASG…RLRKCYEVGM (66 aa)). The interval 252 to 314 (MKGGVRKDRI…GGGRLSVTSI (63 aa)) is hinge. The tract at residues 286 to 308 (KTVHYDGRKRSSTGGGGGGGGGR) is disordered. Gly residues predominate over residues 298–308 (TGGGGGGGGGR). The NR LBD domain occupies 315 to 551 (PPEQVLLLLQ…DLLLEMLDAH (237 aa)). The disordered stretch occupies residues 558 to 620 (RAPQSLSQVD…RPDCTPALQD (63 aa)).

It belongs to the nuclear hormone receptor family. NR3 subfamily. As to quaternary structure, binds DNA as a homodimer. Can form a heterodimer with ER-beta. Widely expressed in brain, ovary, testis, and female liver.

It is found in the nucleus. The steroid hormones and their receptors are involved in the regulation of eukaryotic gene expression and affect cellular proliferation and differentiation in target tissues. This chain is Estrogen receptor (esr1), found in Oryzias latipes (Japanese rice fish).